A 223-amino-acid polypeptide reads, in one-letter code: RNA-free ribonuclease P (223 aa).

This sequence belongs to the HARP family.

The catalysed reaction is Endonucleolytic cleavage of RNA, removing 5'-extranucleotides from tRNA precursor.. Its function is as follows. RNA-free RNase P that catalyzes the removal of the 5'-leader sequence from pre-tRNA to produce the mature 5'-terminus. The chain is RNA-free ribonuclease P from Methanococcus vannielii (strain ATCC 35089 / DSM 1224 / JCM 13029 / OCM 148 / SB).